Here is a 157-residue protein sequence, read N- to C-terminus: UPF0178 protein Nwi_2152 (157 aa).

It belongs to the UPF0178 family.

This is UPF0178 protein Nwi_2152 from Nitrobacter winogradskyi (strain ATCC 25391 / DSM 10237 / CIP 104748 / NCIMB 11846 / Nb-255).